The sequence spans 170 residues: MORN repeat-containing protein 5 (170 aa).

3 MORN repeats span residues 8-30 (YFGEYINGRMEGSAEYILPTDTR), 31-53 (YIGEMKDGMFHGEGTLFFPSGSR), and 54-75 (FDAIWKKGLVVKGKYTFNDGLQ).

In terms of tissue distribution, only detected in testis (at protein level).

Its subcellular location is the cell projection. The protein localises to the cilium. It is found in the flagellum. This is MORN repeat-containing protein 5 (Morn5) from Mus musculus (Mouse).